The following is a 146-amino-acid chain: Large ribosomal subunit protein uL15 (146 aa).

The interval 1–54 (MKLHELRPAAGSKSAPKRVGRGTGSGLGRNAGKGEKGQNARSGGGVRPGFEGGQ) is disordered. Composition is skewed to gly residues over residues 21 to 31 (RGTGSGLGRNA) and 42 to 52 (SGGGVRPGFEG).

Belongs to the universal ribosomal protein uL15 family. Part of the 50S ribosomal subunit.

In terms of biological role, binds to the 23S rRNA. The polypeptide is Large ribosomal subunit protein uL15 (Clostridium perfringens (strain ATCC 13124 / DSM 756 / JCM 1290 / NCIMB 6125 / NCTC 8237 / Type A)).